Reading from the N-terminus, the 1520-residue chain is Putative lipoprotein AcfD homolog (1520 aa).

The N-terminal stretch at 1–23 is a signal peptide; that stretch reads MNKKFKYKKSLLAAILSATLLAG. Disordered regions lie at residues 22 to 107 and 226 to 247; these read AGCD…GATC and NAATDKAPSTHTSPVVPVTTPG. Cys24 carries the N-palmitoyl cysteine lipid modification. Cys24 carries the S-diacylglycerol cysteine lipid modification. Residues 31-42 show a composition bias toward low complexity; it reads SSSDTPPVDSGT. The span at 51–77 shows a compositional bias: pro residues; the sequence is DPTPNPEPTPEPTPDPEPTPEPIPDPE. A compositionally biased stretch (polar residues) spans 97–107; the sequence is GGSQRVTGATC. Residues 234–247 show a composition bias toward low complexity; sequence STHTSPVVPVTTPG. Positions 1081–1381 constitute a Peptidase M60 domain; sequence GNMQSTGLWA…MYAQLKEWAE (301 aa). The disordered stretch occupies residues 1498 to 1520; that stretch reads DLPKPEQGPETINQVTEHKMSAE.

The protein to V.cholerae AcfD (VC_0845).

The protein resides in the cell inner membrane. In terms of biological role, involved in a type II secretion system (T2SS, formerly general secretion pathway, GSP) for the export of folded proteins across the outer membrane. The polypeptide is Putative lipoprotein AcfD homolog (yghJ) (Escherichia coli (strain K12)).